Reading from the N-terminus, the 244-residue chain is MKIDFLTLFPEMFEGVLHSSILKKAQEKEAVSFNVVNFREYSDHKHKTVDDYPYGGGAGMVLKAQPVFDAVEDLTNKASKKPRIILVCPQGERYTQKKAEELAKEEHLMFICGHYEGYDERIREHLVTDEISIGDFVLTGGELPAMMIADSVVRLLPHVLGKEASHIEDSFSTGLLEHPHYTRPADYKGLKVPDVLLSGNHAKIEEWRRKESLKRTYTRRPDLIDSCKTLTEEEKRWLWQLHND.

Residues glycine 113 and 133 to 138 (IGDFVL) each bind S-adenosyl-L-methionine.

It belongs to the RNA methyltransferase TrmD family. Homodimer.

The protein localises to the cytoplasm. It carries out the reaction guanosine(37) in tRNA + S-adenosyl-L-methionine = N(1)-methylguanosine(37) in tRNA + S-adenosyl-L-homocysteine + H(+). Specifically methylates guanosine-37 in various tRNAs. The chain is tRNA (guanine-N(1)-)-methyltransferase from Bacillus pumilus (strain SAFR-032).